A 234-amino-acid polypeptide reads, in one-letter code: Putative gustatory receptor clone PTE38 (234 aa).

A helical transmembrane segment spans residues 1-11 (MYLFFSNLSFN). The Extracellular segment spans residues 12 to 42 (DICIITTTIPKMLMNVQSHDQSITYLGCLSQ). An intrachain disulfide couples cysteine 39 to cysteine 121. Residues 43–62 (VYLIVNFGSIESCLLAVMAY) form a helical membrane-spanning segment. Over 63–84 (DRYVAICHPLKYTVIMNHYFCV) the chain is Cytoplasmic. Residues 85 to 105 (MLLLFACSLALHMCLFHILMV) traverse the membrane as a helical segment. The Extracellular segment spans residues 106-138 (LILTFCTKTEIPHFFCELAHIIKLTCSDNFINY). The chain crosses the membrane as a helical span at residues 139 to 160 (LLIYTVSVLFFGVHIVGIILSY). Residues 161 to 182 (IYTVSSVLRMSLLGGMYKAFST) lie on the Cytoplasmic side of the membrane. Residues 183–202 (CGSHLSVVSLFYGTGFGVHI) traverse the membrane as a helical segment. Topologically, residues 203-212 (SSPLTDSPRK) are extracellular. Residues 213 to 234 (TVVASVMYTVVTQMHGPFIYSL) form a helical membrane-spanning segment.

This sequence belongs to the G-protein coupled receptor 1 family. As to expression, tongue specific.

It localises to the cell membrane. Its function is as follows. Possible taste receptor. The polypeptide is Putative gustatory receptor clone PTE38 (Rattus norvegicus (Rat)).